A 357-amino-acid polypeptide reads, in one-letter code: D(4) dopamine receptor (357 aa).

The Extracellular portion of the chain corresponds to 1–32 (MGNRSAADADGLLAGRGPGTGGGAGSPGAAAA). N3 carries an N-linked (GlcNAc...) asparagine glycan. The helical transmembrane segment at 33–55 (LVGGVLLIGAVLAGNALVCVSVA) threads the bilayer. Residues 56 to 65 (AERALQTPTN) are Cytoplasmic-facing. A helical membrane pass occupies residues 66 to 88 (YFIVSLAAADLLLALLVLPLFVY). D75 contacts Na(+). The Extracellular portion of the chain corresponds to 89-104 (SEVQGGVWQFSPGLCD). C103 and C180 form a disulfide bridge. Residues 105–126 (ALMAMDVMLCTASIFNLCAISA) traverse the membrane as a helical segment. Residue S117 participates in Na(+) binding. The Cytoplasmic segment spans residues 127-146 (DRFVAVAVPLSYNRQSGGGR). The helical transmembrane segment at 147–170 (QLLLIGATWLLSAAVAAPVLCGLN) threads the bilayer. The Extracellular portion of the chain corresponds to 171–186 (DARGRDPAVCRLEDRD). A helical membrane pass occupies residues 187 to 208 (YVVYSSVCSFFLPCPVMLLLYW). Residues 209 to 284 (ATFRGLRRWE…ITGRERKAMR (76 aa)) are Cytoplasmic-facing. Residues 225–261 (LHGRRPRRPSGPGPPPPEAVETPEAPEAIPTPDATLA) are disordered. Positions 233–242 (PSGPGPPPPE) are enriched in pro residues. A compositionally biased stretch (low complexity) spans 243-259 (AVETPEAPEAIPTPDAT). A helical membrane pass occupies residues 285–307 (VLPVVVGAFLVCWTPFFVVHITG). Over 308–316 (ALCPACAVP) the chain is Extracellular. An intrachain disulfide couples C310 to C313. The chain crosses the membrane as a helical span at residues 317–339 (PRLVSAVTWLGYVNSALNPLIYT). Over 340-357 (VFNAEFRAVFRKALRLCC) the chain is Cytoplasmic. Residue C357 is the site of S-palmitoyl cysteine attachment.

This sequence belongs to the G-protein coupled receptor 1 family. As to quaternary structure, forms homo- and heterooligomers with DRD2. D4.7 allele exhibits higher affinity for homodimers compared to DRD2 heterodimers, while alleles D42. and 4.4 have similar affinities for both. The interaction with DRD2 may modulate agonist-induced downstream signaling. Interacts with CLIC6. Interacts with GPRASP1. May interact with ADORA2A. Interacts with KLHL12. Post-translationally, polyubiquitinated by the BCR(KLHL12) E3 ubiquitin ligase complex: polyubiquitination does not lead to degradation of DRD4 protein. In terms of processing, palmitoylated. Palmitoylation of the C-terminal Cys is important for normal expression at the cell membrane.

Its subcellular location is the cell membrane. Functionally, dopamine receptor responsible for neuronal signaling in the mesolimbic system of the brain, an area of the brain that regulates emotion and complex behavior. Activated by dopamine, but also by epinephrine and norepinephrine, and by numerous synthetic agonists and drugs. Agonist binding triggers signaling via G proteins that inhibit adenylyl cyclase. Modulates the circadian rhythm of contrast sensitivity by regulating the rhythmic expression of NPAS2 in the retinal ganglion cells. This chain is D(4) dopamine receptor (DRD4), found in Mustela putorius furo (European domestic ferret).